A 131-amino-acid chain; its full sequence is Ribosome-binding factor A (131 aa).

The protein belongs to the RbfA family. In terms of assembly, monomer. Binds 30S ribosomal subunits, but not 50S ribosomal subunits or 70S ribosomes.

It localises to the cytoplasm. One of several proteins that assist in the late maturation steps of the functional core of the 30S ribosomal subunit. Associates with free 30S ribosomal subunits (but not with 30S subunits that are part of 70S ribosomes or polysomes). Required for efficient processing of 16S rRNA. May interact with the 5'-terminal helix region of 16S rRNA. The protein is Ribosome-binding factor A of Mannheimia succiniciproducens (strain KCTC 0769BP / MBEL55E).